The primary structure comprises 161 residues: Cyclic pyranopterin monophosphate synthase (161 aa).

Substrate contacts are provided by residues 75 to 77 and 113 to 114; these read LCH and ME. The active site involves D128.

The protein belongs to the MoaC family. As to quaternary structure, homohexamer; trimer of dimers.

The enzyme catalyses (8S)-3',8-cyclo-7,8-dihydroguanosine 5'-triphosphate = cyclic pyranopterin phosphate + diphosphate. It functions in the pathway cofactor biosynthesis; molybdopterin biosynthesis. Its function is as follows. Catalyzes the conversion of (8S)-3',8-cyclo-7,8-dihydroguanosine 5'-triphosphate to cyclic pyranopterin monophosphate (cPMP). In Thioalkalivibrio sulfidiphilus (strain HL-EbGR7), this protein is Cyclic pyranopterin monophosphate synthase.